A 297-amino-acid polypeptide reads, in one-letter code: Palmitoyl-protein thioesterase ABHD10, mitochondrial (297 aa).

A mitochondrion-targeting transit peptide spans 1-43 (MAAWVPCRKWGWAAVSFGRHRGLIASLARKPPWAWWLSACRQK). One can recognise an AB hydrolase-1 domain in the interval 69-181 (IIFIPGYLSN…GVVTQFHSLP (113 aa)). Catalysis depends on charge relay system residues serine 143, aspartate 240, and histidine 270.

Belongs to the AB hydrolase superfamily. Expressed in epididymal sperm but not in testicular sperm (at protein level).

Its subcellular location is the mitochondrion. It catalyses the reaction S-hexadecanoyl-L-cysteinyl-[protein] + H2O = L-cysteinyl-[protein] + hexadecanoate + H(+). The catalysed reaction is mycophenolic acid O-acyl-beta-D-glucuronide + H2O = mycophenolate + D-glucuronate + H(+). Its activity is regulated as follows. Inhibited by palmostatin-B. Acts as an acyl-protein thioesterase that hydrolyzes fatty acids from acylated residues in proteins. Regulates the mitochondrial S-depalmitoylation of the nucleophilic active site residue of peroxiredoxin-5/PRDX5, a key antioxidant protein, therefore modulating mitochondrial antioxidant ability. Also catalyzes the deglucuronidation of mycophenolic acid acyl-glucuronide, an active metabolite of the immunosuppressant drug mycophenolate. In Rattus norvegicus (Rat), this protein is Palmitoyl-protein thioesterase ABHD10, mitochondrial.